A 274-amino-acid chain; its full sequence is Penicillin-insensitive murein endopeptidase (274 aa).

Residues 1 to 19 (MNKTAIALLALLASSVSLA) form the signal peptide. Cystine bridges form between C44/C265, C187/C235, and C216/C223. Residues H110, H113, D120, D147, H150, and H211 each contribute to the Zn(2+) site. Positions 227–274 (PLPPPGDGCGAELQSWFEPPKPGTTKPEKKTPPPLPPSCQALLDEHVI) are disordered.

The protein belongs to the peptidase M74 family. Dimer. Requires Zn(2+) as cofactor.

It is found in the periplasm. In terms of biological role, murein endopeptidase that cleaves the D-alanyl-meso-2,6-diamino-pimelyl amide bond that connects peptidoglycan strands. Likely plays a role in the removal of murein from the sacculus. The protein is Penicillin-insensitive murein endopeptidase of Shigella dysenteriae serotype 1 (strain Sd197).